Reading from the N-terminus, the 473-residue chain is Cytochrome P450 716A2 (473 aa).

Residues methionine 1–leucine 21 traverse the membrane as a helical segment. A heme-binding site is contributed by cysteine 420.

Belongs to the cytochrome P450 family. Requires heme as cofactor.

The protein resides in the membrane. In terms of biological role, possesses triterpene oxidizing activity. Catalyzes the C28 hydroxylation of alpha-amyrin, beta-amyrin, and lupeol, producing uvaol, erythrodiol, and betulin, respectively. Catalyzes the C28 carboxylation of alpha- and beta-amyrin. Possesses 22alpha-hydroxylation activity against alpha- and beta-amaryn. The sequence is that of Cytochrome P450 716A2 from Arabidopsis thaliana (Mouse-ear cress).